Reading from the N-terminus, the 440-residue chain is Xaa-Pro dipeptidase (440 aa).

Positions 244, 255, 335, 380, and 419 each coordinate Mn(2+).

This sequence belongs to the peptidase M24B family. Bacterial-type prolidase subfamily. Requires Mn(2+) as cofactor.

The catalysed reaction is Xaa-L-Pro dipeptide + H2O = an L-alpha-amino acid + L-proline. Its function is as follows. Splits dipeptides with a prolyl residue in the C-terminal position. The protein is Xaa-Pro dipeptidase of Shewanella baltica (strain OS195).